The primary structure comprises 1147 residues: MGLLLLILASAVLGSFLTLLAQFLLLYRRQPEPRADEAARAGDGFRYLKPVPGLPLREYLYGGGAEELAACSSEAGASSTPTPDSPAPPTLETCYFLNATILFLFRELRDTALARRWVTKKIKVEFEELLQTKTAGRLLEGLSLRDVFLGDTVPFIKTIRLVRPVVASGTGEPDDPDGDALPATCPEELAFEAEVEYNGGFHLAIDVDLVFGKSAYLFVKLSRVVGRLRFVLTRVPFTHWFFSFVEDPLIDFEVRSQFEGRPMPQLTSIIVNQLKKIIKRKHTLPSYKIRFKPFFPYQALQGFEEDEELIHIQQWALTEGRLKVTLLECSRLFIFGSYDRETNVHCTLELSSGVWEEKQRSSIKTVELIKGNLQSVGLTLRLVQSTDGYAGHVIIETVAPNSPAAMADLQRGDRLIAIGGVKITSTLQVLKLIKQAGDRVLVYYQRPAGQSSQDSLGQLEESFLSSSCQAAYEEDAAGLSADTENRDLDSEFEDLASDVRVQTELKEETQPLSHSPKRTPTTLSIKPLGAISPVLNRKLISGIHPPPQKLPSKEGNKPSTLKTSETTEAAQVSKPQGPTFKPPVPPRPQGRVPLPPTDTSAQADPEAPEKPDKVLLPPPPADKPAEKQVKSVDQGEDVAAGKQSSAKQEGVKDLPSESSAPTKDSSDDPQMWESSEVLYRNKVGKWSRTRASCVFDIEACHRYLNIALWCRDPFKLGGLICLGHVSLKLEEVALGCLATSNMEYLTKFRLEPPTPKAMVTRTALRNLSMQKGFNDKFCFGDITIHFKYLKEGEPDHHIVPNVEKEKELHLVEEVSTLPKEEHFVGQMSLSENKHSFQDTQFQNPTWCDYCKKKVWTKAASQCMFCAYVCHKKCQEKCLAETPLCGATERRIDRTLKNLRLEGQDPLLGLPPRVEIEANKSVNKTTGLTRHIINTSSRLLNLRQVSKTRLSEPGTDLVEPSPKHTPNTSDNEGSDTEVCGSNSPSKRGNSAGIKLMRKEGGLDDSVFIAVKEIGRDLYRGLPTEERIQKLEFMLDKLQNEIDQELEHNNSLVREEKETNDTRKKSVLSAALAKSGERLQALTLLMIHYRAGIEDIETLENLSLDQHSKKMNKYADDTEEDLDSEISQLIDSQPFSNISDDLFGPSESV.

A helical membrane pass occupies residues 2–24 (GLLLLILASAVLGSFLTLLAQFL). Residues 87 to 293 (APPTLETCYF…LPSYKIRFKP (207 aa)) form the SMP-LTD domain. Residues 365 to 448 (TVELIKGNLQ…RVLVYYQRPA (84 aa)) enclose the PDZ domain. Serine 490, serine 515, and serine 532 each carry phosphoserine. Positions 504–673 (ELKEETQPLS…DSSDDPQMWE (170 aa)) are disordered. Over residues 510–524 (QPLSHSPKRTPTTLS) the composition is skewed to polar residues. Positions 557 to 576 (KPSTLKTSETTEAAQVSKPQ) are enriched in polar residues. Residues 580 to 596 (FKPPVPPRPQGRVPLPP) are compositionally biased toward pro residues. Residues 833-884 (KHSFQDTQFQNPTWCDYCKKKVWTKAASQCMFCAYVCHKKCQEKCLAETPLC) form a Phorbol-ester/DAG-type zinc finger. The disordered stretch occupies residues 948 to 990 (RLSEPGTDLVEPSPKHTPNTSDNEGSDTEVCGSNSPSKRGNSA). A phosphoserine mark is found at serine 960 and serine 973. Polar residues predominate over residues 978 to 987 (CGSNSPSKRG). Positions 1021-1056 (PTEERIQKLEFMLDKLQNEIDQELEHNNSLVREEKE) form a coiled coil. Residues 1126–1137 (QLIDSQPFSNIS) show a composition bias toward polar residues. The disordered stretch occupies residues 1126–1147 (QLIDSQPFSNISDDLFGPSESV).

In terms of assembly, interacts with MSN.

Its subcellular location is the endoplasmic reticulum membrane. Molecular tethering protein that connects endoplasmic reticulum and mitochondria membranes. PDZD8-dependent endoplasmic reticulum-mitochondria membrane tethering is essential for endoplasmic reticulum-mitochondria Ca(2+) transfer. In neurons, involved in the regulation of dendritic Ca(2+) dynamics by regulating mitochondrial Ca(2+) uptake in neurons. The chain is PDZ domain-containing protein 8 from Mus musculus (Mouse).